Reading from the N-terminus, the 377-residue chain is Chaperone protein DnaJ (377 aa).

Residues 5–70 (DYYELLGLQK…EKKAKYDQFG (66 aa)) form the J domain. A CR-type zinc finger spans residues 137–219 (GVEKEISVTR…CRGKGSVRKT (83 aa)). 8 residues coordinate Zn(2+): cysteine 150, cysteine 153, cysteine 167, cysteine 170, cysteine 193, cysteine 196, cysteine 207, and cysteine 210. 4 CXXCXGXG motif repeats span residues 150–157 (CEHCHGSG), 167–174 (CPTCSGSG), 193–200 (CDTCRGTG), and 207–214 (CSECRGKG).

It belongs to the DnaJ family. Homodimer. It depends on Zn(2+) as a cofactor.

The protein localises to the cytoplasm. Functionally, participates actively in the response to hyperosmotic and heat shock by preventing the aggregation of stress-denatured proteins and by disaggregating proteins, also in an autonomous, DnaK-independent fashion. Unfolded proteins bind initially to DnaJ; upon interaction with the DnaJ-bound protein, DnaK hydrolyzes its bound ATP, resulting in the formation of a stable complex. GrpE releases ADP from DnaK; ATP binding to DnaK triggers the release of the substrate protein, thus completing the reaction cycle. Several rounds of ATP-dependent interactions between DnaJ, DnaK and GrpE are required for fully efficient folding. Also involved, together with DnaK and GrpE, in the DNA replication of plasmids through activation of initiation proteins. This Clostridium beijerinckii (strain ATCC 51743 / NCIMB 8052) (Clostridium acetobutylicum) protein is Chaperone protein DnaJ.